Reading from the N-terminus, the 248-residue chain is DNA repair protein RecO (248 aa).

This sequence belongs to the RecO family.

In terms of biological role, involved in DNA repair and RecF pathway recombination. The sequence is that of DNA repair protein RecO from Bacillus cereus (strain B4264).